A 435-amino-acid chain; its full sequence is Methylenetetrahydrofolate--tRNA-(uracil-5-)-methyltransferase TrmFO (435 aa).

An FAD-binding site is contributed by 9–14 (GGGLAG).

The protein belongs to the MnmG family. TrmFO subfamily. It depends on FAD as a cofactor.

It localises to the cytoplasm. It carries out the reaction uridine(54) in tRNA + (6R)-5,10-methylene-5,6,7,8-tetrahydrofolate + NADH + H(+) = 5-methyluridine(54) in tRNA + (6S)-5,6,7,8-tetrahydrofolate + NAD(+). The enzyme catalyses uridine(54) in tRNA + (6R)-5,10-methylene-5,6,7,8-tetrahydrofolate + NADPH + H(+) = 5-methyluridine(54) in tRNA + (6S)-5,6,7,8-tetrahydrofolate + NADP(+). In terms of biological role, catalyzes the folate-dependent formation of 5-methyl-uridine at position 54 (M-5-U54) in all tRNAs. This is Methylenetetrahydrofolate--tRNA-(uracil-5-)-methyltransferase TrmFO from Citrifermentans bemidjiense (strain ATCC BAA-1014 / DSM 16622 / JCM 12645 / Bem) (Geobacter bemidjiensis).